The chain runs to 388 residues: Nesprin-4 (388 aa).

Topologically, residues 1-339 (MALVPPLGRE…GVPAPASKRP (339 aa)) are cytoplasmic. The tract at residues 60–92 (ELKSTESATSPSRLPLASSHEHQDGGKPCEHSD) is disordered. Residues 78–92 (SHEHQDGGKPCEHSD) show a composition bias toward basic and acidic residues. Residues 331 to 388 (VPAPASKRPLTLFFLLLFLLLVGATLLLPLSGVSCCSHARLARTPYLVLSYVNGLPPI) form the KASH domain. Residues 340–360 (LTLFFLLLFLLLVGATLLLPL) traverse the membrane as a helical; Anchor for type IV membrane protein segment. Residues 361 to 388 (SGVSCCSHARLARTPYLVLSYVNGLPPI) lie on the Perinuclear space side of the membrane.

It belongs to the nesprin family. Core component of LINC complexes which are composed of inner nuclear membrane SUN domain-containing proteins coupled to outer nuclear membrane KASH domain-containing nesprins. SUN and KASH domain-containing proteins seem to bind each other promiscuously; however, differentially expression of LINC complex constituents can give rise to specific assemblies. Probably part of a SUN1-containing LINC complex. Interacts with kinesins KIF5B and KLC1. In terms of processing, the disulfid bond with SUN1 or SUN2 is required for stability of the respective LINC complex under tensile forces. As to expression, expressed in secretory epithelial cells, such as those found in exocrine pancreas, bulbourethral gland, mammary gland and salivary gland (at protein level). Also expressed in the cochlea, where it is restricted primarily to the 3 rows of outer hair cells and 1 row of inner hair cells (at protein level). Not detected in other cells of the cochlea, including Deiter's cells and pillar cells, nor in liver and kidney (at protein level).

Its subcellular location is the nucleus outer membrane. Functionally, as a component of the LINC (LInker of Nucleoskeleton and Cytoskeleton) complex, involved in the connection between the nuclear lamina and the cytoskeleton. The nucleocytoplasmic interactions established by the LINC complex play an important role in the transmission of mechanical forces across the nuclear envelope and in nuclear movement and positioning. Behaves as a kinesin cargo, providing a functional binding site for kinesin-1 at the nuclear envelope. Hence may contribute to the establishment of secretory epithelial morphology, by promoting kinesin-dependent apical migration of the centrosome and Golgi apparatus and basal localization of the nucleus. The sequence is that of Nesprin-4 (Syne4) from Mus musculus (Mouse).